Reading from the N-terminus, the 494-residue chain is UDP-N-acetylmuramate--L-alanine ligase (494 aa).

140 to 146 lines the ATP pocket; sequence GTHGKTT.

The protein belongs to the MurCDEF family.

It is found in the cytoplasm. The enzyme catalyses UDP-N-acetyl-alpha-D-muramate + L-alanine + ATP = UDP-N-acetyl-alpha-D-muramoyl-L-alanine + ADP + phosphate + H(+). It participates in cell wall biogenesis; peptidoglycan biosynthesis. Cell wall formation. The polypeptide is UDP-N-acetylmuramate--L-alanine ligase (Nostoc sp. (strain PCC 7120 / SAG 25.82 / UTEX 2576)).